Reading from the N-terminus, the 299-residue chain is MADTKTSKCDEHFSVEKLKEWPEPESVSLMELLAREDIDEAVHAVLFRENYVVKRLDTYLQHLAVFKERRKEMLHKKWVENVVQPLQQRITDKITSYRRPGKNQVKYEHCLKQTNKPTKVSSSCLFQKQQEFREAKGTSYQHGRGKTHDTQKEAKETEKGLSFTPFSLRPHCSSPRERQRASARLMQSKPGGRNRYKGASSEKPVFTLKSHLPKEEKTVSRSQLVFERQFRASRLSQDIKEAEKKGLVVGTGPQRPRSWAAADSVPRPSLVGRRVMTAEILGEHLVSLHQAARSGLQWP.

The interval 135–201 (AKGTSYQHGR…GRNRYKGASS (67 aa)) is disordered. Positions 146 to 159 (KTHDTQKEAKETEK) are enriched in basic and acidic residues. S264 bears the Phosphoserine mark.

Belongs to the FAM228 family.

This Mus musculus (Mouse) protein is Protein FAM228A (Fam228a).